The following is an 815-amino-acid chain: SNF1 protein kinase subunit beta-1 (815 aa).

Polar residues predominate over residues 1-11; that stretch reads MGNSPSTQDPS. 2 disordered regions span residues 1–88 and 117–146; these read MGNS…TIDK and SDDH…TVKR. Gly2 is lipidated: N-myristoyl glycine. The span at 12-31 shows a compositional bias: basic and acidic residues; that stretch reads HSTKKEHGHHFHDAFNKDRQ. The span at 32–42 shows a compositional bias: polar residues; that stretch reads GSITSQLFNNR. Ser33 is subject to Phosphoserine. Basic and acidic residues-rich tracts occupy residues 72-88 and 117-129; these read PSTD…TIDK and SDDH…EEQV. 6 positions are modified to phosphoserine: Ser181, Ser198, Ser200, Ser206, Ser209, and Ser220. 2 disordered regions span residues 311-335 and 362-389; these read HANN…NDDF and KHHN…FASL. A compositionally biased stretch (low complexity) spans 313–326; that stretch reads NNNGNIENNTRNKG. Ser331 carries the phosphoserine modification. Positions 363–376 are enriched in basic residues; that stretch reads HHNKTKKAQNKKIR. Positions 377–389 are enriched in low complexity; it reads SVSNSRRSSFASL. Residues 473–716 form a kinase-interacting sequence (KIS); required for interaction with SNF1 region; it reads VSTDIASALK…LQQGGNIDAE (244 aa). Ser494 and Ser497 each carry phosphoserine. Residues 581 to 616 form a disordered region; sequence EPTLDEELPKRPELKRFPSSSRKSSYYSAKGVERPS. The span at 587–596 shows a compositional bias: basic and acidic residues; the sequence is ELPKRPELKR. The segment covering 599 to 608 has biased composition (low complexity); sequence SSSRKSSYYS. The residue at position 643 (Ser643) is a Phosphoserine. The association with SNF1 kinase complex (ASC) domain; required for interaction with SNF4 stretch occupies residues 724–804; the sequence is SRYPVPDLPI…FITQVVYAPC (81 aa).

This sequence belongs to the 5'-AMP-activated protein kinase beta subunit family. Component of the SNF1 kinase complex, a heterotrimeric complex composed of the catalytic alpha subunit SNF1, one of the three related beta subunits SIP1, SIP2 or GAL83, and the regulatory gamma subunit SNF4. The beta subunit serves as a bridge between the catalytic and the regulatory subunit. Interacts (via KIS domain) with SNF1. Interacts (via ASC domain) with SNF4. Phosphorylated by SNF1 in vitro.

It is found in the cytoplasm. The protein resides in the vacuole membrane. Beta subunit of the SNF1 kinase complex, which is required for transcriptional, metabolic, and developmental adaptations in response to glucose limitation. Has a structural role, mediating heterotrimer formation, and a regulatory role, defining carbon source-regulated subcellular location and substrate specificity of the SNF1 kinase complex. Promotes the PKA-regulated relocalization of the SNF1 kinase complex to the vacuolar membrane in response to various types of carbon stress. This is SNF1 protein kinase subunit beta-1 (SIP1) from Saccharomyces cerevisiae (strain ATCC 204508 / S288c) (Baker's yeast).